We begin with the raw amino-acid sequence, 145 residues long: Large ribosomal subunit protein uL11 (145 aa).

This sequence belongs to the universal ribosomal protein uL11 family. Part of the ribosomal stalk of the 50S ribosomal subunit. Interacts with L10 and the large rRNA to form the base of the stalk. L10 forms an elongated spine to which L12 dimers bind in a sequential fashion forming a multimeric L10(L12)X complex. One or more lysine residues are methylated.

Forms part of the ribosomal stalk which helps the ribosome interact with GTP-bound translation factors. The chain is Large ribosomal subunit protein uL11 from Rickettsia africae (strain ESF-5).